Here is a 157-residue protein sequence, read N- to C-terminus: SsrA-binding protein (157 aa).

Residues 126–157 are disordered; it reads GLGKGKQAHDKREAVKERDWQRDRARLMRDRG. Over residues 132–157 the composition is skewed to basic and acidic residues; that stretch reads QAHDKREAVKERDWQRDRARLMRDRG.

Belongs to the SmpB family.

Its subcellular location is the cytoplasm. In terms of biological role, required for rescue of stalled ribosomes mediated by trans-translation. Binds to transfer-messenger RNA (tmRNA), required for stable association of tmRNA with ribosomes. tmRNA and SmpB together mimic tRNA shape, replacing the anticodon stem-loop with SmpB. tmRNA is encoded by the ssrA gene; the 2 termini fold to resemble tRNA(Ala) and it encodes a 'tag peptide', a short internal open reading frame. During trans-translation Ala-aminoacylated tmRNA acts like a tRNA, entering the A-site of stalled ribosomes, displacing the stalled mRNA. The ribosome then switches to translate the ORF on the tmRNA; the nascent peptide is terminated with the 'tag peptide' encoded by the tmRNA and targeted for degradation. The ribosome is freed to recommence translation, which seems to be the essential function of trans-translation. The chain is SsrA-binding protein from Methylobacterium radiotolerans (strain ATCC 27329 / DSM 1819 / JCM 2831 / NBRC 15690 / NCIMB 10815 / 0-1).